Here is a 380-residue protein sequence, read N- to C-terminus: Cytochrome b (380 aa).

Transmembrane regions (helical) follow at residues 34-54 (FGSLLAVCLITQILTGLLLAM), 78-99 (WLLHNLHANGASFFFICIFLHI), 114-134 (WNTGVVLLLTLMATAFVGYVL), and 179-199 (FFALHFLLPFMIAGITIIHLM). Residues His84 and His98 each coordinate heme b. Heme b is bound by residues His183 and His197. Residue His202 participates in a ubiquinone binding. Transmembrane regions (helical) follow at residues 227–247 (IKDILGLTIMLTPLLTLTLFS), 289–309 (LGGVLALAASVLILLLIPFLH), 321–341 (LSQTLFWLLVANLLILTWVGS), and 348–368 (FIIIGQMASLSYFTILLILFP).

Belongs to the cytochrome b family. In terms of assembly, the cytochrome bc1 complex contains 11 subunits: 3 respiratory subunits (MT-CYB, CYC1 and UQCRFS1), 2 core proteins (UQCRC1 and UQCRC2) and 6 low-molecular weight proteins (UQCRH/QCR6, UQCRB/QCR7, UQCRQ/QCR8, UQCR10/QCR9, UQCR11/QCR10 and a cleavage product of UQCRFS1). This cytochrome bc1 complex then forms a dimer. The cofactor is heme b.

It is found in the mitochondrion inner membrane. Component of the ubiquinol-cytochrome c reductase complex (complex III or cytochrome b-c1 complex) that is part of the mitochondrial respiratory chain. The b-c1 complex mediates electron transfer from ubiquinol to cytochrome c. Contributes to the generation of a proton gradient across the mitochondrial membrane that is then used for ATP synthesis. This is Cytochrome b (MT-CYB) from Meleagris gallopavo (Wild turkey).